The chain runs to 3258 residues: Protein unc-80 homolog (3258 aa).

The segment at 152–173 (VENQGSPGQPCQSSSNDEEENN) is disordered. A compositionally biased stretch (low complexity) spans 155–166 (QGSPGQPCQSSS). A Phosphoserine modification is found at Ser-257. Disordered regions lie at residues 291-316 (RGNS…RASL), 449-468 (RKED…GKRR), 522-560 (RRGS…HGEN), 697-717 (KKSE…GAFQ), 732-784 (PAVS…TPVS), 963-1019 (PGKK…EQMQ), 1034-1076 (KSQS…ISLR), 1404-1447 (EDSK…MSNA), and 1817-1836 (AVSA…HHVP). The segment covering 295–307 (FDGSLSSQTSQER) has biased composition (polar residues). A Phosphoserine modification is found at Ser-525. The span at 698-712 (KSENKENETLEKRPS) shows a compositional bias: basic and acidic residues. The span at 732 to 767 (PAVSGAGDGGGEEGGGGDGGGGGGDGGGGGGGGGGP) shows a compositional bias: gly residues. 2 stretches are compositionally biased toward basic and acidic residues: residues 769–780 (EKNDKNQEKDES) and 965–974 (KKVEENEQES). Positions 1035 to 1052 (SQSAASDTSSQSEQDTSE) are enriched in low complexity. Residues 1066–1076 (ARSRSRRISLR) are compositionally biased toward basic residues. Residues 1417–1429 (LKSDAGVEEKKEG) show a composition bias toward basic and acidic residues. 4 helical membrane passes run 2268-2288 (PFVL…DAAN), 2398-2418 (IAAT…VEVL), 2785-2805 (GLAE…LVCF), and 2831-2851 (LALW…FVLL). Positions 2942 to 2964 (NTGTGTVWEQDSEPSQQASQDTL) are enriched in polar residues. Residues 2942-2982 (NTGTGTVWEQDSEPSQQASQDTLSRTDEEDEENDSISMPSV) are disordered. Ser-3042 carries the phosphoserine modification. The interval 3051–3213 (NLLVQQPLGR…DDFTGLETSS (163 aa)) is disordered. Residues 3059–3068 (GRKRGLRQLR) are compositionally biased toward basic residues. Polar residues predominate over residues 3088-3100 (RLSTTRRSIQPKT). Over residues 3117–3129 (PEPAAAPTDALPA) the composition is skewed to low complexity. The segment covering 3175 to 3186 (PTEEGEKEEDTE) has biased composition (acidic residues).

It belongs to the unc-80 family. NALCN complex consists of NALCN and auxiliary subunits, UNC79, UNC80 and NACL1. These auxiliary subunits are essential for the NALCN complex function. Interacts (via N-terminus half) with NALCN; this interaction facilitates NALCN surface localization. Interacts with UNC79. UNC80 bridges NALCN to UNC79. Post-translationally, phosphorylated on tyrosine residues. As to expression, moderately expressed in fetal brain, spinal cord, skeletal muscle, thymus, spleen, fetal liver, small intestine, colon, kidney and uterus. Highly expressed in adrenal gland, prostate and testis, as well as in brain and cerebellum.

The protein localises to the cell membrane. Functionally, auxiliary subunit of the NALCN sodium channel complex, a voltage-gated ion channel responsible for the resting Na(+) permeability that controls neuronal excitability. Activated by neuropeptides substance P, neurotensin, and extracellular Ca(2+) that regulates neuronal excitability by controlling the sizes of NALCN-dependent sodium-leak current. UNC80 is essential for NALCN sensitivity to extracellular Ca(2+). The chain is Protein unc-80 homolog from Homo sapiens (Human).